A 373-amino-acid chain; its full sequence is Indole glucosinolate O-methyltransferase 3 (373 aa).

S-adenosyl-L-homocysteine-binding residues include Gly-217, Asp-240, Asp-260, Met-261, and Lys-274. His-278 (proton acceptor) is an active-site residue.

This sequence belongs to the class I-like SAM-binding methyltransferase superfamily. Cation-independent O-methyltransferase family.

Its pathway is secondary metabolite biosynthesis. Functionally, involved in indole glucosinolate biosynthesis. Catalyzes methoxylation reactions of the glucosinolate indole ring. Converts the hydroxy intermediates 4-hydroxy-indol-3-yl-methylglucosinolate (4OH-I3M) and 1-hydroxy-indol-3-yl-methylglucosinolate (1OH-I3M) to 4-methoxy-indol-3-yl-methylglucosinolate (4MO-I3M) and 1-methoxy-indol-3-yl-methylglucosinolate(1MO-I3M), respectively. The polypeptide is Indole glucosinolate O-methyltransferase 3 (Arabidopsis thaliana (Mouse-ear cress)).